The primary structure comprises 310 residues: tRNA dimethylallyltransferase 2 (310 aa).

15 to 22 (GPTASGKT) is a binding site for ATP. Residue 17–22 (TASGKT) participates in substrate binding. Residues 40-43 (DSMQ) are interaction with substrate tRNA.

Belongs to the IPP transferase family. Monomer. Mg(2+) is required as a cofactor.

The enzyme catalyses adenosine(37) in tRNA + dimethylallyl diphosphate = N(6)-dimethylallyladenosine(37) in tRNA + diphosphate. In terms of biological role, catalyzes the transfer of a dimethylallyl group onto the adenine at position 37 in tRNAs that read codons beginning with uridine, leading to the formation of N6-(dimethylallyl)adenosine (i(6)A). This Geotalea uraniireducens (strain Rf4) (Geobacter uraniireducens) protein is tRNA dimethylallyltransferase 2.